Consider the following 667-residue polypeptide: METLESELTCPICLELFEDPLLLPCAHSLCFNCAHRILVSHCATNEPVESINAFQCPTCRHVITLSQRGLDGLKRNVTLQNIIDRFQKASVSGPNSPSETRRERAFDANTMSSAEKVLCQFCDQDPAQDAVKTCVTCEVSYCDECLKATHPNKKPFTGHRLIEPIPDSHIRGLMCLEHEDEKVNMYCVTDDQLICALCKLVGRHRDHQVAALSERYDKLKQNLESNLTNLIKRNTELETLLAKLIQTCQHVEVNASRQEAKLTEECDLLIEIIQERRQIIGTKIKEGKVMRLRKLAQQIANCKQCIERSASLISQAEHSLKENDHARFLQTAKNITERVSMATASSQVLIPEINLNDTFDTFALDFSREKKLLECLDYLTAPNPPTIREELCTASYDTITVHWTSDDEFSVVSYELQYTIFTGQANVVSLCNSADSWMIVPNIKQNHYTVHGLQSGTKYIFMVKAINQAGSRSSEPGKLKTNSQPFKLDPKSAHRKLKVSHDNLTVERDESSSKKSHTPERFTSQGSYGVAGNVFIDSGRHYWEVVISGSTWYAIGLAYKSAPKHEWIGKNSASWALCRCNNNWVVRHNSKEIPIEPAPHPRRVGILLDYDNGSIAFYDALNSIHLYTFDVALAQPVCPTFTVWNKCLTIITGLPIPDHLDCTEQLP.

The RING-type zinc finger occupies 10–60; sequence CPICLELFEDPLLLPCAHSLCFNCAHRILVSHCATNEPVESINAFQCPTCR. Residues serine 92 and serine 96 each carry the phosphoserine modification. 2 B box-type zinc fingers span residues 116-165 and 172-212; these read KVLC…IEPI and GLMC…VAAL. Zn(2+)-binding residues include cysteine 119, cysteine 122, cysteine 134, cysteine 137, cysteine 142, cysteine 145, histidine 150, histidine 159, cysteine 175, histidine 178, cysteine 198, and histidine 204. Residues 205–264 adopt a coiled-coil conformation; the sequence is RDHQVAALSERYDKLKQNLESNLTNLIKRNTELETLLAKLIQTCQHVEVNASRQEAKLTE. Residues 320–379 form the COS domain; the sequence is LKENDHARFLQTAKNITERVSMATASSQVLIPEINLNDTFDTFALDFSREKKLLECLDYL. One can recognise a Fibronectin type-III domain in the interval 381–484; it reads APNPPTIREE…EPGKLKTNSQ (104 aa). Positions 471-485 are enriched in polar residues; sequence SRSSEPGKLKTNSQP. Residues 471 to 524 are disordered; the sequence is SRSSEPGKLKTNSQPFKLDPKSAHRKLKVSHDNLTVERDESSSKKSHTPERFTS. In terms of domain architecture, B30.2/SPRY spans 482–659; the sequence is NSQPFKLDPK…IITGLPIPDH (178 aa). Over residues 499 to 520 the composition is skewed to basic and acidic residues; it reads VSHDNLTVERDESSSKKSHTPE. Serine 511 is subject to Phosphoserine.

This sequence belongs to the TRIM/RBCC family. As to quaternary structure, homodimer or heterodimer with MID2. Interacts with IGBP1.

The protein localises to the cytoplasm. It localises to the cytoskeleton. It catalyses the reaction S-ubiquitinyl-[E2 ubiquitin-conjugating enzyme]-L-cysteine + [acceptor protein]-L-lysine = [E2 ubiquitin-conjugating enzyme]-L-cysteine + N(6)-ubiquitinyl-[acceptor protein]-L-lysine.. Has E3 ubiquitin ligase activity towards IGBP1, promoting its monoubiquitination, which results in deprotection of the catalytic subunit of protein phosphatase PP2A, and its subsequent degradation by polyubiquitination. The sequence is that of E3 ubiquitin-protein ligase Midline-1 (Mid1) from Rattus norvegicus (Rat).